We begin with the raw amino-acid sequence, 373 residues long: Coiled-coil domain-containing protein 34 (373 aa).

2 disordered regions span residues 1–112 (MWAA…SLRG) and 118–137 (CAST…QVRL). Position 52 is a phosphoserine (Ser-52). Residues 61 to 76 (NSTRSLLSPLGHQSFQ) are compositionally biased toward polar residues. The span at 77-101 (FDEDDGDGEDEEDVDDEEDVDEDAH) shows a compositional bias: acidic residues. Residues 152–286 (KEKEERDRLQ…QEWLENAKHK (135 aa)) adopt a coiled-coil conformation. The disordered stretch occupies residues 324-352 (IHMPPPKEAKDLSGRKSKRPVISQPHKSS). The segment covering 328–337 (PPKEAKDLSG) has biased composition (basic and acidic residues).

Expressed in sperm.

Its subcellular location is the cell projection. The protein resides in the cilium. The protein localises to the flagellum. Its function is as follows. Involved in spermatogenesis. Has a probable role in anterograde intraflagellar transport which is essential for the formation of sperm flagella. This chain is Coiled-coil domain-containing protein 34 (CCDC34), found in Homo sapiens (Human).